The following is a 191-amino-acid chain: uncharacterized protein (191 aa).

To E.coli YecM.

This is an uncharacterized protein from Haemophilus influenzae (strain ATCC 51907 / DSM 11121 / KW20 / Rd).